The sequence spans 137 residues: Acidic phospholipase A2 VP8 (137 aa).

The N-terminal stretch at 1–16 is a signal peptide; the sequence is MRILWIVAVCLIGVEG. Intrachain disulfides connect Cys41/Cys130, Cys43/Cys59, Cys58/Cys110, Cys64/Cys137, Cys65/Cys103, Cys72/Cys96, and Cys90/Cys101. Positions 42, 44, and 46 each coordinate Ca(2+). The active site involves His62. Asp63 is a binding site for Ca(2+). Asp104 is a catalytic residue.

The protein belongs to the phospholipase A2 family. Group II subfamily. D49 sub-subfamily. Does not form a complex. The cofactor is Ca(2+). As to expression, expressed by the venom gland.

The protein localises to the secreted. It catalyses the reaction a 1,2-diacyl-sn-glycero-3-phosphocholine + H2O = a 1-acyl-sn-glycero-3-phosphocholine + a fatty acid + H(+). Snake venom phospholipase A2 (PLA2) that is not toxic by itself, but the synergistical mixture of a basic and this acidic protein is lethal. PLA2 catalyzes the calcium-dependent hydrolysis of the 2-acyl groups in 3-sn-phosphoglycerides. The sequence is that of Acidic phospholipase A2 VP8 from Daboia palaestinae (Palestine viper).